The chain runs to 65 residues: MKIYQCAFCGADIPPGYGIMYVKSDGTVLRYCSRKCFVSATKYGRNPRKLAWVRKLQRKQKQSTS.

Cysteine 6, cysteine 9, cysteine 32, and cysteine 36 together coordinate Zn(2+). The segment at 6 to 36 (CAFCGADIPPGYGIMYVKSDGTVLRYCSRKC) adopts a C4-type zinc-finger fold.

The protein belongs to the eukaryotic ribosomal protein eL24 family. In terms of assembly, part of the 50S ribosomal subunit. Forms a cluster with proteins L3 and L14. Zn(2+) is required as a cofactor.

Binds to the 23S rRNA. This is Large ribosomal subunit protein eL24 from Pyrobaculum arsenaticum (strain DSM 13514 / JCM 11321 / PZ6).